Consider the following 323-residue polypeptide: Elongation factor P--(R)-beta-lysine ligase (323 aa).

74–76 (SPE) is a substrate binding site. ATP is bound by residues 98–100 (RNE) and Asn107. Tyr116 lines the substrate pocket. Residue 242 to 243 (EL) participates in ATP binding. Position 249 (Glu249) interacts with substrate. Residue Gly298 coordinates ATP.

It belongs to the class-II aminoacyl-tRNA synthetase family. EpmA subfamily. As to quaternary structure, homodimer.

The enzyme catalyses D-beta-lysine + L-lysyl-[protein] + ATP = N(6)-((3R)-3,6-diaminohexanoyl)-L-lysyl-[protein] + AMP + diphosphate + H(+). With EpmB is involved in the beta-lysylation step of the post-translational modification of translation elongation factor P (EF-P). Catalyzes the ATP-dependent activation of (R)-beta-lysine produced by EpmB, forming a lysyl-adenylate, from which the beta-lysyl moiety is then transferred to the epsilon-amino group of a conserved specific lysine residue in EF-P. The polypeptide is Elongation factor P--(R)-beta-lysine ligase (Vibrio campbellii (strain ATCC BAA-1116)).